The following is a 496-amino-acid chain: Cytochrome P450 71D181 (496 aa).

Residues 1-21 (MDISISWVAIILVISSYFIFM) traverse the membrane as a helical; Signal-anchor for type II membrane protein segment. C435 contributes to the heme binding site. The interval 471-496 (MSETPGLSGPRKNPLIMVPTIHNPTS) is disordered.

This sequence belongs to the cytochrome P450 family. Heme is required as a cofactor. As to expression, expressed at low levels in flowers, leaves and stems.

It is found in the membrane. The catalysed reaction is alpha-terpinene + 2 reduced [NADPH--hemoprotein reductase] + 2 O2 = carvacrol + 2 oxidized [NADPH--hemoprotein reductase] + 3 H2O + 2 H(+). It carries out the reaction gamma-terpinene + 2 reduced [NADPH--hemoprotein reductase] + 2 O2 = carvacrol + 2 oxidized [NADPH--hemoprotein reductase] + 3 H2O + 2 H(+). It catalyses the reaction (4S)-limonene + reduced [NADPH--hemoprotein reductase] + O2 = (1S,5R)-carveol + oxidized [NADPH--hemoprotein reductase] + H2O + H(+). The enzyme catalyses (4R)-limonene + reduced [NADPH--hemoprotein reductase] + O2 = (1R,5S)-carveol + oxidized [NADPH--hemoprotein reductase] + H2O + H(+). Its pathway is secondary metabolite biosynthesis; terpenoid biosynthesis. Involved in the biosynthesis of phenolic monoterpenes natural products thymol and carvacrol which have a broad range of biological activities acting as antimicrobial compounds, insecticides, antioxidants and pharmaceutical agents. Catalyzes the C2-hydroxylation of gamma-terpinene and alpha-terpinene to produce carvacrol. Also mediates the C6-hydroxylation of (4S)-limonene and (4R)-limonene to form carveol. The protein is Cytochrome P450 71D181 of Origanum vulgare (Wild marjoram).